The sequence spans 204 residues: Large ribosomal subunit protein uL4 (204 aa).

The disordered stretch occupies residues 49–76; that stretch reads KTKGISDVSGTTAKPYGQKRTGRARQGS.

This sequence belongs to the universal ribosomal protein uL4 family. Part of the 50S ribosomal subunit.

Functionally, one of the primary rRNA binding proteins, this protein initially binds near the 5'-end of the 23S rRNA. It is important during the early stages of 50S assembly. It makes multiple contacts with different domains of the 23S rRNA in the assembled 50S subunit and ribosome. In terms of biological role, forms part of the polypeptide exit tunnel. This chain is Large ribosomal subunit protein uL4, found in Wolbachia sp. subsp. Drosophila simulans (strain wRi).